The primary structure comprises 183 residues: Dual-action ribosomal maturation protein DarP (183 aa).

This sequence belongs to the DarP family.

The protein localises to the cytoplasm. Its function is as follows. Member of a network of 50S ribosomal subunit biogenesis factors which assembles along the 30S-50S interface, preventing incorrect 23S rRNA structures from forming. Promotes peptidyl transferase center (PTC) maturation. The protein is Dual-action ribosomal maturation protein DarP of Shigella flexneri serotype 5b (strain 8401).